Here is a 133-residue protein sequence, read N- to C-terminus: UPF0292 protein TON_0187 (133 aa).

A Toprim domain is found at 20–100 (EGAIIVEGPR…RVDSETRKEL (81 aa)). Mg(2+)-binding residues include Glu26, Asp69, and Asp71.

It belongs to the UPF0292 family. Mg(2+) is required as a cofactor.

The polypeptide is UPF0292 protein TON_0187 (Thermococcus onnurineus (strain NA1)).